Here is a 137-residue protein sequence, read N- to C-terminus: Large ribosomal subunit protein uL16 (137 aa).

Basic residues predominate over residues 1 to 17 (MLQPKRTKFRKTHKGRN). Residues 1–23 (MLQPKRTKFRKTHKGRNRGLAQN) form a disordered region.

The protein belongs to the universal ribosomal protein uL16 family. As to quaternary structure, part of the 50S ribosomal subunit.

Binds 23S rRNA and is also seen to make contacts with the A and possibly P site tRNAs. The chain is Large ribosomal subunit protein uL16 from Pseudoalteromonas translucida (strain TAC 125).